Consider the following 345-residue polypeptide: S-adenosylmethionine:tRNA ribosyltransferase-isomerase (345 aa).

Belongs to the QueA family. Monomer.

It localises to the cytoplasm. It catalyses the reaction 7-aminomethyl-7-carbaguanosine(34) in tRNA + S-adenosyl-L-methionine = epoxyqueuosine(34) in tRNA + adenine + L-methionine + 2 H(+). It functions in the pathway tRNA modification; tRNA-queuosine biosynthesis. Its function is as follows. Transfers and isomerizes the ribose moiety from AdoMet to the 7-aminomethyl group of 7-deazaguanine (preQ1-tRNA) to give epoxyqueuosine (oQ-tRNA). This is S-adenosylmethionine:tRNA ribosyltransferase-isomerase from Acinetobacter baumannii (strain ATCC 17978 / DSM 105126 / CIP 53.77 / LMG 1025 / NCDC KC755 / 5377).